Consider the following 174-residue polypeptide: Vimentin-type intermediate filament-associated coiled-coil protein (174 aa).

Residues 7–97 (LQIREANAHL…DQRDQMIQQL (91 aa)) are a coiled coil. Residues 128-174 (GPLPASHSHRAQLLPDGPGPPLGNNMGKEEGQDDQDDQQPAVFGTTV) form a disordered region.

The protein localises to the cytoplasm. The chain is Vimentin-type intermediate filament-associated coiled-coil protein (Vmac) from Mus musculus (Mouse).